The primary structure comprises 110 residues: UPF0060 membrane protein Noc_2955 (110 aa).

The next 4 helical transmembrane spans lie at Val7–Trp27, Thr33–Leu53, Ala63–Ile83, and Thr87–Pro107.

The protein belongs to the UPF0060 family.

It is found in the cell inner membrane. The sequence is that of UPF0060 membrane protein Noc_2955 from Nitrosococcus oceani (strain ATCC 19707 / BCRC 17464 / JCM 30415 / NCIMB 11848 / C-107).